Here is a 217-residue protein sequence, read N- to C-terminus: Putative peroxiredoxin Q, chloroplastic (217 aa).

A chloroplast-targeting transit peptide spans 1–66 (MAFAVSTACR…PSTTGRNRIV (66 aa)). Residues 70–217 (VSKGSAAPNF…GETLKILQSL (148 aa)) enclose the Thioredoxin domain. Cysteine 112 serves as the catalytic Cysteine sulfenic acid (-SOH) intermediate. The cysteines at positions 112 and 117 are disulfide-linked.

Belongs to the peroxiredoxin family. BCP/PrxQ subfamily. In terms of assembly, monomer.

It localises to the plastid. The protein resides in the chloroplast thylakoid lumen. The enzyme catalyses a hydroperoxide + [thioredoxin]-dithiol = an alcohol + [thioredoxin]-disulfide + H2O. Its function is as follows. Thiol-specific peroxidase that catalyzes the reduction of hydrogen peroxide and organic hydroperoxides to water and alcohols, respectively. Plays a role in cell protection against oxidative stress by detoxifying peroxides. The chain is Putative peroxiredoxin Q, chloroplastic from Oryza sativa subsp. indica (Rice).